The following is a 326-amino-acid chain: WD repeat-containing protein slr1409 (326 aa).

WD repeat units follow at residues Gly47–Thr77, Gly88–Asn118, Pro129–Thr159, Leu169–Asn199, Thr210–Asn240, and Val252–Gln282.

In Synechocystis sp. (strain ATCC 27184 / PCC 6803 / Kazusa), this protein is WD repeat-containing protein slr1409.